The primary structure comprises 255 residues: MPEATNIQVVIASGLDNEENNDHLVQSSDPQHPANLIPEMCRKFYTWGWVTGTGGGTSIRHGDHIFIAPSGVQKELIQPENIFVMQFPTPKYPPSERKYIRKPKNLKPSDCTPLFLTAFERGAMCCIHTHSQWAVLVTLLVERIYGKEAHFEISNIEQIKGIPKGKGKGMHNYHDTLRIPIIDNTPFEEDLTEGLERAIAANPDTYAVLVRRHGIYVWGDTPAKAKTQCESLDWLFQLAVEMHKLGLPWDINKTK.

Substrate is bound at residue cysteine 111. The Zn(2+) site is built by histidine 128 and histidine 130. The active-site Proton donor/acceptor is the glutamate 157. Histidine 213 lines the Zn(2+) pocket.

This sequence belongs to the aldolase class II family. MtnB subfamily. It depends on Zn(2+) as a cofactor.

It localises to the cytoplasm. It carries out the reaction 5-(methylsulfanyl)-D-ribulose 1-phosphate = 5-methylsulfanyl-2,3-dioxopentyl phosphate + H2O. The protein operates within amino-acid biosynthesis; L-methionine biosynthesis via salvage pathway; L-methionine from S-methyl-5-thio-alpha-D-ribose 1-phosphate: step 2/6. Functionally, catalyzes the dehydration of methylthioribulose-1-phosphate (MTRu-1-P) into 2,3-diketo-5-methylthiopentyl-1-phosphate (DK-MTP-1-P). The polypeptide is Methylthioribulose-1-phosphate dehydratase (Talaromyces stipitatus (strain ATCC 10500 / CBS 375.48 / QM 6759 / NRRL 1006) (Penicillium stipitatum)).